The chain runs to 343 residues: Anthranilate phosphoribosyltransferase (343 aa).

Residues Gly-84, 87–88 (GD), Thr-92, 94–97 (NIST), 112–120 (KHGNRSASS), and Ser-124 contribute to the 5-phospho-alpha-D-ribose 1-diphosphate site. Residue Gly-84 participates in anthranilate binding. Ser-96 lines the Mg(2+) pocket. Asn-115 contacts anthranilate. Residue Arg-170 coordinates anthranilate. Residues Asp-229 and Glu-230 each coordinate Mg(2+).

Belongs to the anthranilate phosphoribosyltransferase family. In terms of assembly, homodimer. Mg(2+) is required as a cofactor.

It carries out the reaction N-(5-phospho-beta-D-ribosyl)anthranilate + diphosphate = 5-phospho-alpha-D-ribose 1-diphosphate + anthranilate. The protein operates within amino-acid biosynthesis; L-tryptophan biosynthesis; L-tryptophan from chorismate: step 2/5. Its function is as follows. Catalyzes the transfer of the phosphoribosyl group of 5-phosphorylribose-1-pyrophosphate (PRPP) to anthranilate to yield N-(5'-phosphoribosyl)-anthranilate (PRA). The polypeptide is Anthranilate phosphoribosyltransferase (Bordetella bronchiseptica (strain ATCC BAA-588 / NCTC 13252 / RB50) (Alcaligenes bronchisepticus)).